A 132-amino-acid chain; its full sequence is uncharacterized protein (132 aa).

This sequence to M.jannaschii MJ0661.

This is an uncharacterized protein from Helicobacter pylori (strain J99 / ATCC 700824) (Campylobacter pylori J99).